The sequence spans 225 residues: MVQSCSAYGCKNRYDKDRPISFHKFPLKRPLLCKKWEAAVRRADFKPTKYSSICSDHFTADCFKRECNNKLLKDNAVPTVFALAEIKKKMGKAVKKEQLPAELEPVPAVPEVDPAIGLLLPPLYTPSHIAVICDHNYTVEDTVHQRRRIQQLEEQVDKLRKKLKIANQKCRRQERSLEKLEKEVSEYREAKGSGYVIFPGNYYEVLNENEYKELTPEITYKEIIL.

The segment at 5 to 57 (CSAYGCKNRYDKDRPISFHKFPLKRPLLCKKWEAAVRRADFKPTKYSSICSDH) adopts a THAP-type zinc-finger fold. Positions 139–194 (VEDTVHQRRRIQQLEEQVDKLRKKLKIANQKCRRQERSLEKLEKEVSEYREAKGSG) form a coiled coil.

The protein belongs to the THAP1 family.

The protein resides in the nucleus. The protein localises to the nucleoplasm. Its function is as follows. DNA-binding transcription regulator that regulates endothelial cell proliferation and G1/S cell-cycle progression. Specifically binds the 5'-[AT]NTNN[GT]GGCA[AGT]-3' core DNA sequence and acts by modulating expression of pRB-E2F cell-cycle target genes. The polypeptide is THAP domain-containing protein 1 B (thap1-b) (Xenopus laevis (African clawed frog)).